We begin with the raw amino-acid sequence, 310 residues long: Tagatose-6-phosphate kinase (310 aa).

It belongs to the carbohydrate kinase PfkB family. LacC subfamily.

It carries out the reaction D-tagatofuranose 6-phosphate + ATP = D-tagatofuranose 1,6-bisphosphate + ADP + H(+). The protein operates within carbohydrate metabolism; D-tagatose 6-phosphate degradation; D-glyceraldehyde 3-phosphate and glycerone phosphate from D-tagatose 6-phosphate: step 1/2. This chain is Tagatose-6-phosphate kinase, found in Streptococcus mutans serotype c (strain ATCC 700610 / UA159).